Reading from the N-terminus, the 116-residue chain is Hydrogenase maturation factor HypA (116 aa).

H2 provides a ligand contact to Ni(2+). Zn(2+) contacts are provided by C73, C76, C90, and C93.

This sequence belongs to the HypA/HybF family.

Functionally, involved in the maturation of [NiFe] hydrogenases. Required for nickel insertion into the metal center of the hydrogenase. The polypeptide is Hydrogenase maturation factor HypA (Escherichia coli O157:H7).